The following is a 244-amino-acid chain: ATP synthase subunit a, chloroplastic (244 aa).

5 helical membrane-spanning segments follow: residues 35-55, 92-112, 131-151, 196-216, and 217-237; these read QVLITSWVVIAILLGSAAIAV, VPFIGTLFLFIFVSNWSGALL, INTTVALALLTSVAYFYAGIT, LVVVVLVSLVPLVVPIPVMFL, and GLFTSGIQALIFATLAAAYIG.

The protein belongs to the ATPase A chain family. As to quaternary structure, F-type ATPases have 2 components, CF(1) - the catalytic core - and CF(0) - the membrane proton channel. CF(1) has five subunits: alpha(3), beta(3), gamma(1), delta(1), epsilon(1). CF(0) has four main subunits: a, b, b' and c.

It is found in the plastid. Its subcellular location is the chloroplast thylakoid membrane. Key component of the proton channel; it plays a direct role in the translocation of protons across the membrane. The polypeptide is ATP synthase subunit a, chloroplastic (Coffea arabica (Arabian coffee)).